A 265-amino-acid polypeptide reads, in one-letter code: UPF0354 protein GTNG_2723 (265 aa).

The protein belongs to the UPF0354 family.

In Geobacillus thermodenitrificans (strain NG80-2), this protein is UPF0354 protein GTNG_2723.